Reading from the N-terminus, the 483-residue chain is Uridine/cytidine kinase UKL1, chloroplastic (483 aa).

The transit peptide at 1-47 (MPEDSTAIDYVMEKASGPHFSGLRLDGLLSSPSKSSVSSPSHFRLSN) directs the protein to the chloroplast. The tract at residues 59–264 (PHQPFVIGVT…IVQHIHTKLG (206 aa)) is uridine kinase. The tract at residues 274–483 (NVFVIETTFQ…FGDRYFGTDE (210 aa)) is uracil phosphoribosyltransferase. Residues lysine 298, arginine 307, and 341–344 (CKKL) contribute to the GTP site. Positions 351 and 376 each coordinate 5-phospho-alpha-D-ribose 1-diphosphate. Arginine 396 is a GTP binding site. 5-phospho-alpha-D-ribose 1-diphosphate contacts are provided by residues aspartate 402, 407–410 (TGNS), and glutamate 473. 472–474 (GEF) serves as a coordination point for uracil.

The protein in the N-terminal section; belongs to the uridine kinase family. In the C-terminal section; belongs to the UPRTase family.

It is found in the plastid. Its subcellular location is the chloroplast. It catalyses the reaction cytidine + ATP = CMP + ADP + H(+). It carries out the reaction uridine + ATP = UMP + ADP + H(+). It participates in pyrimidine metabolism; CTP biosynthesis via salvage pathway; CTP from cytidine: step 1/3. It functions in the pathway pyrimidine metabolism; UMP biosynthesis via salvage pathway; UMP from uridine: step 1/1. Involved in the pyrimidine salvage pathway. Phosphorylates uridine to uridine monophosphate (UMP). Phosphorylates cytidine to cytidine monophosphate (CMP). Does not possess uracil phosphoribosyltransferase (UPRTase) activity that catalyzes the conversion of uracil and 5-phospho-alpha-D-ribose 1-diphosphate (PRPP) to UMP and diphosphate. The protein is Uridine/cytidine kinase UKL1, chloroplastic of Arabidopsis thaliana (Mouse-ear cress).